The chain runs to 446 residues: Zinc finger protein BALDIBIS (446 aa).

The disordered stretch occupies residues 20-53; that stretch reads EHIAPNPNPNPNPTSSNSAKRKRNLPGNPDPDAE. Ser-58 bears the Phosphoserine mark. 2 C2H2-type zinc fingers span residues 68-90 and 110-140; these read FICEVCNKGFKRDQNLQLHRRGH and YICPEKTCVHHDPARALGDLTGIKKHFSRKH. Residues 132 to 139 carry the Nuclear localization signal motif; the sequence is IKKHFSRK. A C2H2-type 2; degenerate zinc finger spans residues 145 to 168; it reads WKCDKCSKKYAVMSDWKAHSKICG. The Zn(2+) site is built by Cys-147, Cys-150, His-163, Cys-167, Cys-174, Cys-176, His-189, and Cys-193. A CCHC-type 2; atypical zinc finger spans residues 172 to 195; sequence YRCDCGTLFSRKDSFITHRAFCDA. The segment at 182–194 is SHR-binding; that stretch reads RKDSFITHRAFCD. Residues 425–446 form a disordered region; it reads HNLPDSSPPASTDGTPTADMNQ. The span at 427-446 shows a compositional bias: polar residues; it reads LPDSSPPASTDGTPTADMNQ.

As to quaternary structure, binds to RGA and SCL3 competitively in the nucleus. As to expression, expressed in roots, especially in vascular initials, cortex, endodermis, and quiescent center (QC).

It localises to the nucleus. In terms of biological role, transcription factor that, together with JKD, regulates tissue boundaries and asymmetric cell division in roots by a rapid up-regulation of 'SCARECROW' (SCR), thus controlling the nuclear localization of 'SHORT-ROOT' (SHR) and restricting its action. Confines CYCD6 expression to the cortex-endodermis initial/daughter (CEI/CEID) tissues. Binds DNA via its zinc fingers. Recognizes and binds to SCL3 promoter sequence 5'-AGACAA-3' to promote its expression when in complex with RGA. This Arabidopsis thaliana (Mouse-ear cress) protein is Zinc finger protein BALDIBIS.